Consider the following 530-residue polypeptide: Autoinducer-2 kinase (530 aa).

This sequence belongs to the FGGY kinase family.

It localises to the cytoplasm. The catalysed reaction is (S)-4,5-dihydroxypentane-2,3-dione + ATP = (2S)-2-hydroxy-3,4-dioxopentyl phosphate + ADP + H(+). Functionally, catalyzes the phosphorylation of autoinducer-2 (AI-2) to phospho-AI-2, which subsequently inactivates the transcriptional regulator LsrR and leads to the transcription of the lsr operon. Phosphorylates the ring-open form of (S)-4,5-dihydroxypentane-2,3-dione (DPD), which is the precursor to all AI-2 signaling molecules, at the C5 position. This Escherichia coli (strain ATCC 8739 / DSM 1576 / NBRC 3972 / NCIMB 8545 / WDCM 00012 / Crooks) protein is Autoinducer-2 kinase.